Reading from the N-terminus, the 247-residue chain is DNA repair protein RecO (247 aa).

Belongs to the RecO family.

Its function is as follows. Involved in DNA repair and RecF pathway recombination. In Caldanaerobacter subterraneus subsp. tengcongensis (strain DSM 15242 / JCM 11007 / NBRC 100824 / MB4) (Thermoanaerobacter tengcongensis), this protein is DNA repair protein RecO.